We begin with the raw amino-acid sequence, 486 residues long: UDP-N-acetylmuramate--L-alanine ligase (486 aa).

Residue 123–129 participates in ATP binding; the sequence is GTHGKTT.

The protein belongs to the MurCDEF family.

The protein resides in the cytoplasm. It carries out the reaction UDP-N-acetyl-alpha-D-muramate + L-alanine + ATP = UDP-N-acetyl-alpha-D-muramoyl-L-alanine + ADP + phosphate + H(+). The protein operates within cell wall biogenesis; peptidoglycan biosynthesis. In terms of biological role, cell wall formation. In Pseudomonas fluorescens (strain Pf0-1), this protein is UDP-N-acetylmuramate--L-alanine ligase.